Reading from the N-terminus, the 2128-residue chain is Spectrin beta chain, erythrocytic (2128 aa).

Over residues Met-1 to Pro-15 the composition is skewed to polar residues. Residues Met-1–Leu-30 are disordered. The segment at Thr-2–His-275 is actin-binding. Ser-36 bears the Phosphoserine mark. Calponin-homology (CH) domains are found at residues Val-54–Gln-158 and Arg-173–Ser-278. A Phosphothreonine modification is found at Thr-104. Spectrin repeat units lie at residues Met-303–Arg-411, Arg-416–Glu-517, Ala-521–Gln-627, Arg-630–Asp-733, Asn-736–Glu-838, Val-845–Val-942, Asn-950–Gly-1050, Lys-1054–Thr-1157, Phe-1162–Lys-1250, Glu-1267–Ser-1368, Ala-1381–Leu-1455, Leu-1473–Asp-1574, His-1576–Asn-1680, Tyr-1682–Leu-1784, Asp-1789–Leu-1890, Phe-1897–His-1997, and Gln-2004–Thr-2064. Ser-1289 carries the post-translational modification Phosphoserine. Ser-2034 is subject to Phosphoserine. The disordered stretch occupies residues Pro-2062–Ser-2108. Phosphothreonine is present on residues Thr-2064, Thr-2072, and Thr-2101. Residues Glu-2066–Glu-2078 are compositionally biased toward basic and acidic residues. Phosphoserine occurs at positions 2105, 2108, 2114, 2116, and 2119.

The protein belongs to the spectrin family. Composed of nonhomologous chains, alpha and beta, which aggregate to form dimers, tetramers, and higher polymers. Interacts with BCAM.

The protein localises to the cytoplasm. It localises to the cytoskeleton. Its subcellular location is the cell cortex. Functionally, spectrin is the major constituent of the cytoskeletal network underlying the erythrocyte plasma membrane. It associates with band 4.1 and actin to form the cytoskeletal superstructure of the erythrocyte plasma membrane. The polypeptide is Spectrin beta chain, erythrocytic (Sptb) (Mus musculus (Mouse)).